Consider the following 1442-residue polypeptide: DNA polymerase III PolC-type (1442 aa).

Positions 409–568 constitute an Exonuclease domain; that stretch reads YVIFDIETTG…YDAIVLADVF (160 aa).

Belongs to the DNA polymerase type-C family. PolC subfamily.

The protein resides in the cytoplasm. The catalysed reaction is DNA(n) + a 2'-deoxyribonucleoside 5'-triphosphate = DNA(n+1) + diphosphate. Functionally, required for replicative DNA synthesis. This DNA polymerase also exhibits 3' to 5' exonuclease activity. This Ureaplasma parvum serovar 3 (strain ATCC 700970) protein is DNA polymerase III PolC-type.